We begin with the raw amino-acid sequence, 105 residues long: Small ribosomal subunit protein uS10 (105 aa).

It belongs to the universal ribosomal protein uS10 family. In terms of assembly, part of the 30S ribosomal subunit.

Involved in the binding of tRNA to the ribosomes. The protein is Small ribosomal subunit protein uS10 of Maridesulfovibrio salexigens (strain ATCC 14822 / DSM 2638 / NCIMB 8403 / VKM B-1763) (Desulfovibrio salexigens).